A 307-amino-acid chain; its full sequence is UDP-N-acetylenolpyruvoylglucosamine reductase (307 aa).

The 165-residue stretch at 34-198 (LGGKADVYIT…LEATFALKKA (165 aa)) folds into the FAD-binding PCMH-type domain. R177 is a catalytic residue. S227 serves as the catalytic Proton donor. The active site involves E297.

It belongs to the MurB family. Requires FAD as cofactor.

The protein resides in the cytoplasm. It carries out the reaction UDP-N-acetyl-alpha-D-muramate + NADP(+) = UDP-N-acetyl-3-O-(1-carboxyvinyl)-alpha-D-glucosamine + NADPH + H(+). Its pathway is cell wall biogenesis; peptidoglycan biosynthesis. In terms of biological role, cell wall formation. The protein is UDP-N-acetylenolpyruvoylglucosamine reductase of Oceanobacillus iheyensis (strain DSM 14371 / CIP 107618 / JCM 11309 / KCTC 3954 / HTE831).